Consider the following 3763-residue polypeptide: Colossin-B (3763 aa).

An N-terminal signal peptide occupies residues 1–19 (MKGSIFLLFIFQIFKFSSS). 4 N-linked (GlcNAc...) asparagine glycosylation sites follow: Asn-43, Asn-110, Asn-258, and Asn-284. The region spanning 619–643 (DCSTLQCPSGYECKLDKNSKTRGCI) is the Follistatin-like 1 domain. N-linked (GlcNAc...) asparagine glycosylation is found at Asn-652 and Asn-672. 2 consecutive Follistatin-like domains span residues 701 to 724 (HCRNVDCPKSHYCKIQRNGLPRCF) and 729 to 752 (PCEFVSCDCNLECRVTSCGDAKCF). The segment at 792–832 (PPIFYETPSPTSAPPTETPSPTDTPTDKPTIPPTPTPTPSK) is disordered. Positions 810-820 (PSPTDTPTDKP) are enriched in low complexity. Asn-845 and Asn-991 each carry an N-linked (GlcNAc...) asparagine glycan. 2 disordered regions span residues 1033–1068 (LGSSGSGSSGNSGSSGSGGSSNDSTESQWSSESESS) and 1095–1124 (PQPTPSTDIPTTTTTTTSTSTTGPIEPTST). A compositionally biased stretch (gly residues) spans 1036–1051 (SGSGSSGNSGSSGSGG). 2 stretches are compositionally biased toward low complexity: residues 1052–1068 (SSNDSTESQWSSESESS) and 1099–1124 (PSTDIPTTTTTTTSTSTTGPIEPTST). Residue Asn-1054 is glycosylated (N-linked (GlcNAc...) asparagine). The CNA-B 1 domain occupies 1159-1227 (VSGVEITLIQ…LLNKYPIDTS (69 aa)). 2 N-linked (GlcNAc...) asparagine glycosylation sites follow: Asn-1229 and Asn-1247. A CNA-B 2 domain is found at 1304 to 1373 (IKGIQVTLKD…VYTMDTFQLS (70 aa)). A glycan (N-linked (GlcNAc...) asparagine) is linked at Asn-1381. CNA-B domains lie at 1437-1515 (LPGV…IDTK), 1582-1648 (VPGI…LTLD), and 1731-1809 (VGGV…FTLS). Residues Asn-1769 and Asn-1815 are each glycosylated (N-linked (GlcNAc...) asparagine). The interval 1883-1955 (GSTVDGGTSV…SEQPPEDSME (73 aa)) is disordered. Residues 1898–1948 (STSTTTVSSSPSSSSDIGSSSDISSEVSSSLSSSPSSSEQPSEQSSSSSEQ) show a composition bias toward low complexity. The CNA-B 6 domain maps to 2015–2083 (VPDVTVTLVN…DPLSGKIDFN (69 aa)). Residues Asn-2128, Asn-2145, Asn-2243, Asn-2294, Asn-2351, Asn-2378, Asn-2453, Asn-2493, Asn-2496, Asn-2516, Asn-2572, Asn-2601, Asn-2624, Asn-2668, Asn-2698, Asn-2714, Asn-2781, Asn-2787, Asn-2800, Asn-2838, and Asn-2858 are each glycosylated (N-linked (GlcNAc...) asparagine). In terms of domain architecture, CNA-B 7 spans 2143–2197 (FPNITVRLFDQNLQPVLDNFNIQVEPTVTNALGQYYFDNLHSGSYIVKFEVPTRY). The region spanning 2292–2345 (VPNVTVEIFNPTGQQVYNINELLIGSTTTDSNGYYLFDEIQPGSYIIKFSNIPN) is the CNA-B 8 domain. The 25-residue stretch at 2453-2477 (NTTTTDQNGLYYFDNLSPGLYKLLF) folds into the CNA-B 9 domain. Residues 2713-2766 (VNGTIVTLLDINGNTMVDADSYPINSYTTGPDGYYKFDDFSFGKYIITFSGVPD) enclose the CNA-B 10 domain. Residues 2984-3061 (LGGVVVTLYN…DSNASPVDGY (78 aa)) enclose the CNA-B 11 domain. N-linked (GlcNAc...) asparagine glycosylation is found at Asn-3083, Asn-3130, Asn-3372, Asn-3390, Asn-3459, Asn-3466, Asn-3557, Asn-3666, Asn-3676, and Asn-3681. Residues 3128–3201 (YPNITVSIYT…TKTGVNLGII (74 aa)) enclose the CNA-B 12 domain. The region spanning 3664-3733 (MANITVQLFS…NDKRDLEKIN (70 aa)) is the CNA-B 13 domain.

This sequence belongs to the serine-aspartate repeat-containing protein (SDr) family.

Its subcellular location is the secreted. The sequence is that of Colossin-B (colB) from Dictyostelium discoideum (Social amoeba).